The primary structure comprises 359 residues: Mitochondrial calcium uniporter regulator 1 (359 aa).

Topologically, residues 1 to 68 are mitochondrial intermembrane; the sequence is MDCGSVGGQR…ARGGVSRASP (68 aa). A helical transmembrane segment spans residues 69 to 85; it reads LLLLLLVPSPRLAAAAP. Over 86–338 the chain is Mitochondrial matrix; it reads RRQLGDWERS…LESHKLDNIK (253 aa). A coiled-coil region spans residues 235–310; sequence EKSEFSALRA…VALHAQQDRA (76 aa). The chain crosses the membrane as a helical span at residues 339-358; it reads YLAGSIFTCLTVALGFYRLW. Residue Ile-359 is a topological domain, mitochondrial intermembrane.

The protein belongs to the CCDC90 family. In terms of assembly, interacts (via coiled coil regions) with MCU; the interaction is direct. Interacts with SMDT1/EMRE; the interaction is direct. Interacts with PPIF. Ubiquitously expressed.

The protein resides in the mitochondrion inner membrane. Key regulator of mitochondrial calcium uniporter (MCU) required for calcium entry into mitochondrion. Plays a direct role in uniporter-mediated calcium uptake via a direct interaction with MCU. Probably involved in the assembly of the membrane components of the uniporter complex (uniplex). The polypeptide is Mitochondrial calcium uniporter regulator 1 (Homo sapiens (Human)).